The chain runs to 254 residues: Major prion protein (254 aa).

Residues 1–22 (MANLGYWLLALFVATWTDVGLC) form the signal peptide. Positions 23-231 (KKRPKPGGWN…SQAYYDGRRS (209 aa)) are interaction with GRB2, ERI3 and SYN1. The interval 25–107 (RPKPGGWNTG…QWNKPSKPKT (83 aa)) is disordered. Tandem repeats lie at residues 51-59 (PQGGGTWGQ), 60-67 (PHGGGWGQ), 68-75 (PHGGGWGQ), 76-83 (PHGGGWGQ), and 84-91 (PHGGGWGQ). The 5 X 8 AA tandem repeats of P-H-G-G-G-W-G-Q stretch occupies residues 51–91 (PQGGGTWGQPHGGGWGQPHGGGWGQPHGGGWGQPHGGGWGQ). Gly residues predominate over residues 52–95 (QGGGTWGQPHGGGWGQPHGGGWGQPHGGGWGQPHGGGWGQGGGT). The Cu(2+) site is built by H61, G62, G63, H69, G70, G71, H77, G78, G79, H85, G86, and G87. C179 and C214 form a disulfide bridge. Residues N181 and N197 are each glycosylated (N-linked (GlcNAc...) asparagine). S231 carries the GPI-anchor amidated serine lipid modification. A propeptide spans 232–254 (SAVLFSSPPMILLISFLIFLIVG) (removed in mature form).

It belongs to the prion family. Monomer and homodimer. Has a tendency to aggregate into amyloid fibrils containing a cross-beta spine, formed by a steric zipper of superposed beta-strands. Soluble oligomers may represent an intermediate stage on the path to fibril formation. Copper binding may promote oligomerization. Interacts with GRB2, APP, ERI3/PRNPIP and SYN1. Mislocalized cytosolically exposed PrP interacts with MGRN1; this interaction alters MGRN1 subcellular location and causes lysosomal enlargement. Interacts with KIAA1191.

The protein resides in the cell membrane. Its subcellular location is the golgi apparatus. Its function is as follows. Its primary physiological function is unclear. Has cytoprotective activity against internal or environmental stresses. May play a role in neuronal development and synaptic plasticity. May be required for neuronal myelin sheath maintenance. May play a role in iron uptake and iron homeostasis. Soluble oligomers are toxic to cultured neuroblastoma cells and induce apoptosis (in vitro). Association with GPC1 (via its heparan sulfate chains) targets PRNP to lipid rafts. Also provides Cu(2+) or Zn(2+) for the ascorbate-mediated GPC1 deaminase degradation of its heparan sulfate side chains. This Sigmodon hispidus (Hispid cotton rat) protein is Major prion protein (PRNP).